Reading from the N-terminus, the 333-residue chain is Anthranilate phosphoribosyltransferase (333 aa).

5-phospho-alpha-D-ribose 1-diphosphate contacts are provided by residues Gly-78, 81–82 (GD), Thr-86, 88–91 (NVST), 106–114 (KHGNYSVSS), and Ser-118. Anthranilate is bound at residue Gly-78. Residue Ser-90 participates in Mg(2+) binding. Residue Asn-109 coordinates anthranilate. Arg-164 is an anthranilate binding site. The Mg(2+) site is built by Asp-222 and Glu-223.

This sequence belongs to the anthranilate phosphoribosyltransferase family. Homodimer. It depends on Mg(2+) as a cofactor.

It carries out the reaction N-(5-phospho-beta-D-ribosyl)anthranilate + diphosphate = 5-phospho-alpha-D-ribose 1-diphosphate + anthranilate. It participates in amino-acid biosynthesis; L-tryptophan biosynthesis; L-tryptophan from chorismate: step 2/5. Its function is as follows. Catalyzes the transfer of the phosphoribosyl group of 5-phosphorylribose-1-pyrophosphate (PRPP) to anthranilate to yield N-(5'-phosphoribosyl)-anthranilate (PRA). This chain is Anthranilate phosphoribosyltransferase, found in Natronomonas pharaonis (strain ATCC 35678 / DSM 2160 / CIP 103997 / JCM 8858 / NBRC 14720 / NCIMB 2260 / Gabara) (Halobacterium pharaonis).